The primary structure comprises 92 residues: Ferredoxin-like protein in nif region (92 aa).

2 consecutive 4Fe-4S ferredoxin-type domains span residues 2-28 (ALKI…SLAG) and 29-65 (PHFE…LADG). 8 residues coordinate [4Fe-4S] cluster: C9, C12, C15, C19, C38, C41, C50, and C54.

[4Fe-4S] cluster is required as a cofactor.

In terms of biological role, ferredoxins are iron-sulfur proteins that transfer electrons in a wide variety of metabolic reactions. This Azotobacter vinelandii protein is Ferredoxin-like protein in nif region.